Reading from the N-terminus, the 167-residue chain is Ammonium/H(+) antiporter subunit AmhM (167 aa).

The RCK C-terminal domain maps to I79–C163.

Interacts with AmhT.

The protein resides in the cell membrane. In terms of biological role, modulates the activity of the ammonium/proton antiporter AmhT. In Alkalihalophilus pseudofirmus (strain ATCC BAA-2126 / JCM 17055 / OF4) (Bacillus pseudofirmus), this protein is Ammonium/H(+) antiporter subunit AmhM (amhM).